Reading from the N-terminus, the 668-residue chain is CLK4-associating serine/arginine rich protein (668 aa).

Position 101 is a phosphoserine (Ser101). Disordered regions lie at residues 173–232 (AEVE…GMAD) and 252–668 (AKAL…HYRH). Residues 182–214 (PEEEESPAEEESNSDEDEVIPDIDVEVDVDELN) show a composition bias toward acidic residues. Residues 265 to 283 (RRSRRQRREFREKRLRGRK) are compositionally biased toward basic residues. Phosphoserine occurs at positions 285 and 294. The segment covering 290–313 (ARRDSPTYDPYKRSPSESSSESRS) has biased composition (basic and acidic residues). Thr327 carries the phosphothreonine modification. Residues Ser331 and Ser335 each carry the phosphoserine modification. The segment covering 340–353 (AAAAAAAAASGAAP) has biased composition (low complexity). Pro residues predominate over residues 354–365 (GKPPAPPQPGGP). Low complexity predominate over residues 378-395 (SSSSASRTSSSRSSSRSS). Basic residues predominate over residues 396–435 (SRSRRGYYRSGRHARSRSRSWSRSRSRSRRYSRSRSRGRR). Positions 436–446 (HSDGGSRDGHR) are enriched in basic and acidic residues. The segment covering 475–486 (RGARGPRHHSSS) has biased composition (basic residues). 2 stretches are compositionally biased toward low complexity: residues 487–510 (HSRS…SRSQ) and 518–527 (QSHSQSQSHS). Ser541 is subject to Phosphoserine. Thr567 carries the post-translational modification Phosphothreonine. Positions 579 to 641 (ALNRQFKADK…ERQYSRQSRS (63 aa)) form a coiled coil. Basic and acidic residues-rich tracts occupy residues 584 to 611 (FKAD…ELRA) and 619 to 635 (KERE…ERQY). The segment covering 636–645 (SRQSRSPSPR) has biased composition (low complexity). The span at 653–668 (SRRRSRSRSRSPHYRH) shows a compositional bias: basic residues.

This sequence belongs to the splicing factor SR family. As to quaternary structure, probably interacts with CLK4. Post-translationally, phosphorylated in vitro by CLK4.

It localises to the nucleus. In terms of biological role, probably functions as an alternative splicing regulator. May regulate the mRNA splicing of genes such as CLK1. May act by regulating members of the CLK kinase family. In Rattus norvegicus (Rat), this protein is CLK4-associating serine/arginine rich protein (Clasrp).